A 48-amino-acid chain; its full sequence is Large ribosomal subunit protein bL32c (48 aa).

Belongs to the bacterial ribosomal protein bL32 family.

The protein localises to the plastid. It localises to the chloroplast. The chain is Large ribosomal subunit protein bL32c (rpl32) from Vicia faba (Broad bean).